The primary structure comprises 126 residues: Holo-[acyl-carrier-protein] synthase (126 aa).

Residues D9 and E58 each coordinate Mg(2+).

The protein belongs to the P-Pant transferase superfamily. AcpS family. Mg(2+) is required as a cofactor.

The protein localises to the cytoplasm. It catalyses the reaction apo-[ACP] + CoA = holo-[ACP] + adenosine 3',5'-bisphosphate + H(+). Its function is as follows. Transfers the 4'-phosphopantetheine moiety from coenzyme A to a Ser of acyl-carrier-protein. This is Holo-[acyl-carrier-protein] synthase from Buchnera aphidicola subsp. Cinara cedri (strain Cc).